The primary structure comprises 244 residues: Agamous-like MADS-box protein MADS3 (244 aa).

The MADS-box domain occupies 1-61; the sequence is MGRGRVELKR…GKLYEFGSAG (61 aa). Positions 85 to 175 constitute a K-box domain; the sequence is TQSWYQEVSK…KLKLEAEGQS (91 aa). Residues 180-206 are disordered; the sequence is QGSWNPSTATAGNSSFPVHPSQSNPMD. Over residues 181-204 the composition is skewed to polar residues; that stretch reads GSWNPSTATAGNSSFPVHPSQSNP.

Expressed in flowers and seeds.

The protein resides in the nucleus. In terms of biological role, probable transcription factor involved in flower development. This chain is Agamous-like MADS-box protein MADS3, found in Vitis vinifera (Grape).